We begin with the raw amino-acid sequence, 324 residues long: MYG1 protein C694.04c (324 aa).

This sequence belongs to the MYG1 family.

This chain is MYG1 protein C694.04c, found in Schizosaccharomyces pombe (strain 972 / ATCC 24843) (Fission yeast).